Consider the following 420-residue polypeptide: GDP-mannose transporter 2 (420 aa).

Residues 1–11 (MASYTPSSSRP) are compositionally biased toward polar residues. Residues 1–21 (MASYTPSSSRPHTPLGLSPRG) are disordered. Residues 1 to 76 (MASYTPSSSR…KAKKEEVCMP (76 aa)) are Cytoplasmic-facing. The chain crosses the membrane as a helical span at residues 77 to 97 (ASTTVLPILSYCVASIMMTVV). The Lumenal segment spans residues 98–106 (NKFVVSGRQ). A helical membrane pass occupies residues 107-127 (FTMTFLLLAIQSFVCVACVWL). The Cytoplasmic segment spans residues 128–145 (AKRIGVINFRDWDMNDAK). Residues 146–168 (AWFPVSSLLVAVIYTGSKSLQFL) traverse the membrane as a helical segment. Topologically, residues 169 to 171 (SIP) are lumenal. Residues 172–194 (VYTIFKNLTIILIAYGEVIWFGG) form a helical membrane-spanning segment. At 195 to 200 (HVTPLT) the chain is on the cytoplasmic side. A helical transmembrane segment spans residues 201-223 (LCSFFLMVGSSVIAAWADISTTL). Residues 224 to 251 (SKLSAGVAVVDPISGADVPLSSISVMDT) are Lumenal-facing. A helical membrane pass occupies residues 252-272 (MNVGYLWMFINCLASAGYVLF). Over 273–293 (MRKRIKVTGFKDWDSMFYNNL) the chain is Cytoplasmic. Residues 294 to 314 (LSIPVLFVFSLIIEDWGAASF) traverse the membrane as a helical segment. Topologically, residues 315-323 (SRNFPEEGR) are lumenal. The helical transmembrane segment at 324-344 (AFLLSAIAFSGAAAVFISYST) threads the bilayer. At 345 to 355 (AWCVRICGATT) the chain is on the cytoplasmic side. The helical transmembrane segment at 356-376 (YSLVGALNKLPVAASGILFFG) threads the bilayer. The Lumenal segment spans residues 377–378 (DP). Residues 379 to 399 (VNFGNVSAILVGGVSGIVYAV) traverse the membrane as a helical segment. Topologically, residues 400–420 (AKTNQAKVEKSKQARGGESKA) are cytoplasmic.

The protein belongs to the TPT transporter family. SLC35D subfamily. As to quaternary structure, homooligomer.

It is found in the golgi apparatus membrane. The protein resides in the cytoplasmic vesicle membrane. It localises to the endoplasmic reticulum membrane. In terms of biological role, involved in the import of GDP-mannose from the cytoplasm into the Golgi lumen. This Cryptococcus neoformans var. neoformans serotype D (strain B-3501A) (Filobasidiella neoformans) protein is GDP-mannose transporter 2 (GMT2).